Here is a 264-residue protein sequence, read N- to C-terminus: S-adenosylmethionine decarboxylase proenzyme (264 aa).

The active-site Schiff-base intermediate with substrate; via pyruvic acid is S113. Position 113 is a pyruvic acid (Ser); by autocatalysis (S113). H118 (proton acceptor; for processing activity) is an active-site residue. C141 functions as the Proton donor; for catalytic activity in the catalytic mechanism.

It belongs to the prokaryotic AdoMetDC family. Type 2 subfamily. In terms of assembly, heterooctamer of four alpha and four beta chains arranged as a tetramer of alpha/beta heterodimers. The cofactor is pyruvate. Post-translationally, is synthesized initially as an inactive proenzyme. Formation of the active enzyme involves a self-maturation process in which the active site pyruvoyl group is generated from an internal serine residue via an autocatalytic post-translational modification. Two non-identical subunits are generated from the proenzyme in this reaction, and the pyruvate is formed at the N-terminus of the alpha chain, which is derived from the carboxyl end of the proenzyme. The post-translation cleavage follows an unusual pathway, termed non-hydrolytic serinolysis, in which the side chain hydroxyl group of the serine supplies its oxygen atom to form the C-terminus of the beta chain, while the remainder of the serine residue undergoes an oxidative deamination to produce ammonia and the pyruvoyl group blocking the N-terminus of the alpha chain.

The enzyme catalyses S-adenosyl-L-methionine + H(+) = S-adenosyl 3-(methylsulfanyl)propylamine + CO2. It functions in the pathway amine and polyamine biosynthesis; S-adenosylmethioninamine biosynthesis; S-adenosylmethioninamine from S-adenosyl-L-methionine: step 1/1. In terms of biological role, catalyzes the decarboxylation of S-adenosylmethionine to S-adenosylmethioninamine (dcAdoMet), the propylamine donor required for the synthesis of the polyamines spermine and spermidine from the diamine putrescine. The chain is S-adenosylmethionine decarboxylase proenzyme from Pseudomonas syringae pv. syringae (strain B728a).